Consider the following 595-residue polypeptide: Estrogen receptor (595 aa).

The tract at residues 1-184 (MTMTLHTKAS…AMESAKETRY (184 aa)) is modulating (transactivation AF-1); mediates interaction with MACROD1. O-linked (GlcNAc) serine glycosylation occurs at Ser10. The interval 35–47 (LERPLGEVYVDSS) is required for interaction with NCOA1. Residues 35–174 (LERPLGEVYV…LASTSDKGSM (140 aa)) are interaction with DDX5; self-association. A phosphoserine; by CDK2 mark is found at Ser104 and Ser106. The residue at position 118 (Ser118) is a Phosphoserine. Positions 144–174 (AGPPAFYRPNSDNRRQGGRERLASTSDKGSM) are disordered. The segment covering 154–165 (SDNRRQGGRERL) has biased composition (basic and acidic residues). Position 167 is a phosphoserine; by CK2 (Ser167). 2 consecutive NR C4-type zinc fingers follow at residues 185-205 (CAVC…CEGC) and 221-245 (CPAT…LRKC). Positions 185–250 (CAVCNDYASG…RLRKCYEVGM (66 aa)) form a DNA-binding region, nuclear receptor. The tract at residues 185 to 310 (CAVCNDYASG…TKKNSPVLSL (126 aa)) is mediates interaction with DNTTIP2. Residues 251–310 (MKGGIRKDRRGGRMLKHKRQRDDGEGRNEAVPPGDMRSANLWPSPLLIKHTKKNSPVLSL) are hinge. Residues 257 to 269 (KDRRGGRMLKHKR) show a composition bias toward basic residues. The interval 257–288 (KDRRGGRMLKHKRQRDDGEGRNEAVPPGDMRS) is disordered. Arg260 carries the asymmetric dimethylarginine; by PRMT1 modification. The interval 262–595 (GRMLKHKRQR…GEAENFPTTI (334 aa)) is interaction with AKAP13. A self-association region spans residues 264–594 (MLKHKRQRDD…TGEAENFPTT (331 aa)). In terms of domain architecture, NR LBD spans 311-547 (TADQMISALL…DLLLEMLDAH (237 aa)). A transactivation AF-2 region spans residues 311–594 (TADQMISALL…TGEAENFPTT (284 aa)). 17beta-estradiol is bound by residues Glu353 and Arg394. Cys447 carries the S-palmitoyl cysteine lipid modification. His524 is a 17beta-estradiol binding site. Position 537 is a phosphotyrosine; by Tyr-kinases (Tyr537). The tract at residues 551–575 (APTNLGGPPPEDMSQSQLATSGSTP) is disordered. Positions 563-575 (MSQSQLATSGSTP) are enriched in polar residues.

Belongs to the nuclear hormone receptor family. NR3 subfamily. Binds DNA as a homodimer. Can form a heterodimer with ESR2. Interacts with coactivator NCOA5. Interacts with PELP1, the interaction is enhanced by 17-beta-estradiol; the interaction increases ESR1 transcriptional activity. Interacts with NCOA7; the interaction is ligand-inducible. Interacts with AKAP13, CUEDC2, HEXIM1, KDM5A, MAP1S, SMARD1, and UBE1C. Interacts with MUC1; the interaction is stimulated by 7 beta-estradiol (E2) and enhances ESR1-mediated transcription. Interacts with DNTTIP2, and UIMC1. Interacts with KMT2D/MLL2. Interacts with ATAD2; the interaction is enhanced by estradiol. Interacts with KIF18A and LDB1. Interacts with RLIM (via its C-terminus). Interacts with MACROD1. Interacts with SH2D4A and PLCG. Interacts with SH2D4A; the interaction blocks binding to PLCG and inhibits estrogen-induced cell proliferation. Interacts with DYNLL1. Interacts with CCDC62; the interaction requires estradiol and appears to enhance the transcription of target genes. Interacts with NR2C1; the interaction prevents homodimerization of ESR1 and suppresses its transcriptional activity and cell growth. Interacts with DNAAF4. Interacts with PRMT2. Interacts with RBFOX2. Interacts with EP300; the interaction is estrogen-dependent and enhanced by CITED1. Interacts with CITED1; the interaction is estrogen-dependent. Interacts with FAM120B, FOXL2, PHB2 and SLC30A9. Interacts with coactivators NCOA3 and NCOA6. Interacts with STK3/MST2 only in the presence of SAV1 and vice-versa. Binds to CSNK1D. Interacts with NCOA2; NCOA2 can interact with ESR1 AF-1 and AF-2 domains simultaneously and mediate their transcriptional synergy. Interacts with DDX5. Interacts with NCOA1; the interaction seems to require a self-association of N-terminal and C-terminal regions. Interacts with ZNF366, DDX17, NFKB1, RELA, SP1 and SP3. Interacts with NRIP1. Interacts with GPER1; the interaction occurs in an estrogen-dependent manner. Interacts with CLOCK and the interaction is stimulated by estrogen. Interacts with TRIP4 (ufmylated); estrogen dependent. Interacts with LMTK3; the interaction phosphorylates ESR1 (in vitro) and protects it against proteasomal degradation. Interacts with CCAR2 (via N-terminus) in a ligand-independent manner. Interacts with ZFHX3. Interacts with SFR1 in a ligand-dependent and -independent manner. Interacts with DCAF13, LATS1 and DCAF1; regulates ESR1 ubiquitination and ubiquitin-mediated proteasomal degradation. Interacts (via DNA-binding domain) with POU4F2 (C-terminus); this interaction increases the estrogen receptor ESR1 transcriptional activity in a DNA- and ligand 17-beta-estradiol-independent manner. Interacts with ESRRB isoform 1. Interacts with UBE3A and WBP2. Interacts with GTF2B. Interacts with RBM39. In the absence of hormonal ligand, interacts with TACC1. Interacts with PI3KR1 or PI3KR2 and PTK2/FAK1. Interacts with SRC. Interacts with BAG1; the interaction is promoted in the absence of estradiol (17-beta-estradiol/E2). Interacts with and ubiquitinated by STUB1; the interaction is promoted in the absence of estradiol (17-beta-estradiol/E2). Interacts with NEDD8. In terms of processing, phosphorylated by cyclin A/CDK2 and CK1. Phosphorylation probably enhances transcriptional activity. Dephosphorylation at Ser-118 by PPP5C inhibits its transactivation activity. Phosphorylated by LMTK3 (in vitro). Post-translationally, ubiquitinated; regulated by LATS1 via DCAF1 it leads to ESR1 proteasomal degradation. Deubiquitinated by OTUB1. Ubiquitinated by STUB1/CHIP; in the CA1 hippocampal region following loss of endogenous circulating estradiol (17-beta-estradiol/E2). Ubiquitinated by UBR5, leading to its degradation: UBR5 specifically recognizes and binds ligand-bound ESR1 when it is not associated with coactivators (NCOAs). In presence of NCOAs, the UBR5-degron is not accessible, preventing its ubiquitination and degradation. Palmitoylated at Cys-447 by ZDHHC7 and ZDHHC21. Palmitoylation is required for plasma membrane targeting and for rapid intracellular signaling via ERK and AKT kinases and cAMP generation, but not for signaling mediated by the nuclear hormone receptor. In terms of processing, dimethylated by PRMT1 at Arg-260. The methylation may favor cytoplasmic localization. Demethylated by JMJD6 at Arg-260.

The protein localises to the nucleus. The protein resides in the cytoplasm. Its subcellular location is the golgi apparatus. It is found in the cell membrane. Functionally, nuclear hormone receptor. The steroid hormones and their receptors are involved in the regulation of eukaryotic gene expression and affect cellular proliferation and differentiation in target tissues. Ligand-dependent nuclear transactivation involves either direct homodimer binding to a palindromic estrogen response element (ERE) sequence or association with other DNA-binding transcription factors, such as AP-1/c-Jun, c-Fos, ATF-2, Sp1 and Sp3, to mediate ERE-independent signaling. Ligand binding induces a conformational change allowing subsequent or combinatorial association with multiprotein coactivator complexes through LXXLL motifs of their respective components. Mutual transrepression occurs between the estrogen receptor (ER) and NF-kappa-B in a cell-type specific manner. Decreases NF-kappa-B DNA-binding activity and inhibits NF-kappa-B-mediated transcription from the IL6 promoter and displace RELA/p65 and associated coregulators from the promoter. Recruited to the NF-kappa-B response element of the CCL2 and IL8 promoters and can displace CREBBP. Present with NF-kappa-B components RELA/p65 and NFKB1/p50 on ERE sequences. Can also act synergistically with NF-kappa-B to activate transcription involving respective recruitment adjacent response elements; the function involves CREBBP. Can activate the transcriptional activity of TFF1. Also mediates membrane-initiated estrogen signaling involving various kinase cascades. Essential for MTA1-mediated transcriptional regulation of BRCA1 and BCAS3. Maintains neuronal survival in response to ischemic reperfusion injury when in the presence of circulating estradiol (17-beta-estradiol/E2). This chain is Estrogen receptor (ESR1), found in Sus scrofa (Pig).